Here is a 148-residue protein sequence, read N- to C-terminus: HTH-type transcriptional regulator BilQ (148 aa).

The 140-residue stretch at Met1–Asp140 folds into the HTH marR-type domain. Positions Leu54–Gln77 form a DNA-binding region, H-T-H motif.

Functionally, transcription regulator that regulates expression of the bilirubin reductase operon (bilQ, bilR and bilS). The polypeptide is HTH-type transcriptional regulator BilQ (Clostridioides difficile (strain CD3)).